The following is an 864-amino-acid chain: NT-3 growth factor receptor (864 aa).

The N-terminal stretch at 1–31 (MDVSLCPAKCSFWRIFLLGSVWLDYVGSVLA) is a signal peptide. Intrachain disulfides connect Cys-32–Cys-38 and Cys-36–Cys-45. Over 32-429 (CPANCVCSKT…TVTHKPEEDT (398 aa)) the chain is Extracellular. 3 N-linked (GlcNAc...) asparagine glycosylation sites follow: Asn-68, Asn-72, and Asn-79. 2 LRR repeats span residues 104–125 (GLQK…AFAK) and 128–149 (HLRY…LFQT). N-linked (GlcNAc...) asparagine glycans are attached at residues Asn-133 and Asn-163. The LRRCT domain occupies 160 to 209 (NFFNCSCDIRWMQLWQEQGEARLDSQSLYCISADGSQLPLFRMNISQCDL). Disulfide bonds link Cys-164/Cys-189 and Cys-166/Cys-207. Asn-203, Asn-218, Asn-232, Asn-259, Asn-267, Asn-272, and Asn-294 each carry an N-linked (GlcNAc...) asparagine glycan. Ig-like C2-type domains are found at residues 210–300 (PEIS…VALT) and 309–382 (SLVE…IAKN). The cysteines at positions 231 and 284 are disulfide-linked. Cys-320 and Cys-362 are oxidised to a cystine. Asn-375 and Asn-388 each carry an N-linked (GlcNAc...) asparagine glycan. Residues 430–453 (FGVSIAVGLAAFACVLLVVLFIMI) form a helical membrane-spanning segment. Residues 454–864 (NKYGRRSKFG…ATPIYLDILG (411 aa)) are Cytoplasmic-facing. Ser-493 is modified (phosphoserine). Residue Tyr-516 is modified to Phosphotyrosine; by autocatalysis. Positions 538–853 (IVLKRELGEG…EIYKILHALG (316 aa)) constitute a Protein kinase domain. ATP is bound by residues 544–552 (LGEGAFGKV) and Lys-572. Asp-679 functions as the Proton acceptor in the catalytic mechanism. Phosphotyrosine; by autocatalysis is present on residues Tyr-705, Tyr-709, Tyr-710, and Tyr-859.

This sequence belongs to the protein kinase superfamily. Tyr protein kinase family. Insulin receptor subfamily. As to quaternary structure, exists in a dynamic equilibrium between monomeric (low affinity) and dimeric (high affinity) structures. Binds SH2B2. Interacts with SQSTM1 and KIDINS220. Interacts with PTPRS. Interacts with MAPK8IP3/JIP3. In terms of processing, ligand-mediated auto-phosphorylation. As to expression, widely expressed, mainly in the nervous tissue.

It localises to the membrane. It carries out the reaction L-tyrosyl-[protein] + ATP = O-phospho-L-tyrosyl-[protein] + ADP + H(+). Functionally, receptor tyrosine kinase involved in nervous system and probably heart development. Upon binding of its ligand NTF3/neurotrophin-3, NTRK3 autophosphorylates and activates different signaling pathways, including the phosphatidylinositol 3-kinase/AKT and the MAPK pathways, that control cell survival and differentiation. NTRK3 isoforms containing insertions within the kinase domain can autophosphorylate in response to NTF3/neurotrophin-3, but cannot mediate downstream phenotypic responses. This is NT-3 growth factor receptor (Ntrk3) from Rattus norvegicus (Rat).